Reading from the N-terminus, the 645-residue chain is Phosphomethylpyrimidine synthase (645 aa).

Substrate-binding positions include Asn-235, Met-264, Tyr-293, His-329, 349–351, 390–393, and Glu-429; these read SRG and DGLR. A Zn(2+)-binding site is contributed by His-433. Substrate is bound at residue Tyr-456. His-497 is a binding site for Zn(2+). 3 residues coordinate [4Fe-4S] cluster: Cys-577, Cys-580, and Cys-585.

It belongs to the ThiC family. As to quaternary structure, homodimer. Requires [4Fe-4S] cluster as cofactor.

The enzyme catalyses 5-amino-1-(5-phospho-beta-D-ribosyl)imidazole + S-adenosyl-L-methionine = 4-amino-2-methyl-5-(phosphooxymethyl)pyrimidine + CO + 5'-deoxyadenosine + formate + L-methionine + 3 H(+). The protein operates within cofactor biosynthesis; thiamine diphosphate biosynthesis. Catalyzes the synthesis of the hydroxymethylpyrimidine phosphate (HMP-P) moiety of thiamine from aminoimidazole ribotide (AIR) in a radical S-adenosyl-L-methionine (SAM)-dependent reaction. The polypeptide is Phosphomethylpyrimidine synthase (Vibrio cholerae serotype O1 (strain ATCC 39541 / Classical Ogawa 395 / O395)).